Consider the following 1804-residue polypeptide: MFSALRSKNQSNKRSNDDSINSRKDVNELSLGAGGTSTSTNTNHNDSPSIKNKNKNKNKNKTENENIYKLTISSGRSRGTASNTTNANTLVLNAGVAIVGKAPIASSQNEIQTISGQSLQSGIDTNLMTAGFGRSAGIDSTTTVSHDANSVKSRLQRLPTITTSYKEINNGNKPVQVEPQDDSHYTSSLLVDTDPRSNNQPQSISSNAVANVEINRTLQLDLVYHESRVSEKLVMLDLKKLPHIKEGQLCELRTYRKRKSTSARSNKNSRDKKLYFIAHDFDEETRKRCHKFGNISVALGQLQLLLDLPPRSRVWIKPKRKEDTAADLIELHIKDILVNRGDMWCMSSELVDTCVFTGQRIMFLDSIRTTVNGIYKNGKKVLSGYINDNTKIVFRSESSRLLFIIQITNEMWSFDESGEQMFQKMINSFFPKIFNKWKDIETHHSITIAFAISMDMSTSSYKDLKPGQRIKNTTDYYRIVVDQVSVIYWVEIMESLRKEFMEITRELLSRKSDDKKDNELSVIKGRFAPVIKSNILELINFAATTIVDPFRQLDLRHTSTHVMIISPGKGLYDVDYDLLQLSCKKLLSLELTMDLICLSNPPLHVVPLFRYIDYENKLHHCIPPWLNIFFWNDKTKDTNKWTPRCQIYDLQMMGLTDTELVQELELDYLNPSDDINDLQTFLKDYDRDIFLPISTANFKAENISSDPDEEDLKELKKINDKTTTIHKSSTSRNTLTKSQRTNSEENNSIRSRKGDTIIKDPQFVGKISNSSRNNPPYDLSDKSTFEKQFKPKTTFHPSAMIKKTPENMKKLTNPVFQQQYFDIQTDNGLTGNSKNLLIKNTKYLTPIIDEPQTPLVTGNLYRTRFESQSNDNELNENSKLPERGGGTDERRNVSAADTLKDVTKKSSIKDFTQRIFTKFLATTKQSNFNSDGINSSAITEDAVLISDDTDGKTNNNNDFAVYPSSVADGDVSGDNQHRLNNKDSFTSILKPIPRPQLGVKIFKSDINNLSSNENVNSETKQNLLGTRNTINRKQFTASPHFTSSTKNSVSNHSRFIKFDSMDDWIEILEDSIPSYSFLGDDLLPTRWRDVWPKNVFRKYSKWKSFTSPAELPITLKRFPSKYELENNFMLRNHSVTQNWEQEQYKLTTKDLLRNMIYLRLLVGFQICTSSTIEEVESARKGDRDVFAIHKYLRGDLTGTFKIYMLMGSEIHRLHYDNSGTINVERYIEKSERNVFDQVPSYTSFVKTRYDSNYRKTDVDPIHTKRSEFNWNLLDQLLAGYSDPYLYDEWHGFRSKYVILPAEIPSNTFSMVVNGKNETLTTEEIRVEGLRKLIASITRLKLLSVEESKIQKDRKTEIQPEVIFYTGSLFDFLNEQQAQLDSSTLNFKDSIFGDVTKKLNKNIDLKNLAQELQMGENKLNLVTRKWHWKRHANCFVGSEMVNWLIRNFSDIDTRSTAISYGQKLMNDGLFIHVLDKHSFLDGNYFYQISPEFIINMNTVERTNSKNSNTSDNNTLKKTTSRNSTESNLTPLSMRNKVSTMDDDSTQLANTTSANSYKEKKTVVLSNSMLINVDPSSKSYKEELCTVHFDRVHNPEHCFHIRLEWLTTTPKLIDNMLGNWARICEKYGLKLIEIPWNELCTIPSVDPFHTFVQLHLVINPWEDPEFNDPELFAVSKFYYHIHLLKMSGFLLDNRASRFFQRDDADFEIMYSWGKPQFKYAQYIHTTGAYIAEMRENGNIFLAPNNVYMSRVNRANVISKTRSSPTFTVDSRKVVIEFSRTCYSYAKLRAVFLDAKEKWLSNKTVED.

Residues 1 to 13 (MFSALRSKNQSNK) are compositionally biased toward polar residues. Disordered regions lie at residues 1–65 (MFSA…TENE), 169–204 (NNGNKPVQVEPQDDSHYTSSLLVDTDPRSNNQPQSI), 723–797 (TTIH…TFHP), and 866–892 (ESQSNDNELNENSKLPERGGGTDERRN). A compositionally biased stretch (basic and acidic residues) spans 14-27 (RSNDDSINSRKDVN). Composition is skewed to polar residues over residues 185 to 204 (YTSSLLVDTDPRSNNQPQSI) and 723 to 749 (TTIHKSSTSRNTLTKSQRTNSEENNSI). Residues 779-789 (LSDKSTFEKQF) are compositionally biased toward basic and acidic residues. Polar residues predominate over residues 866 to 878 (ESQSNDNELNENS). The span at 879–892 (KLPERGGGTDERRN) shows a compositional bias: basic and acidic residues. Positions 1414 to 1489 (GENKLNLVTR…DGNYFYQISP (76 aa)) constitute a DEP domain. The disordered stretch occupies residues 1501–1528 (TNSKNSNTSDNNTLKKTTSRNSTESNLT). Positions 1503 to 1516 (SKNSNTSDNNTLKK) are enriched in low complexity.

The protein belongs to the IML1 family.

It is found in the vacuole membrane. This chain is Vacuolar membrane-associated protein IML1 (IML1), found in Candida glabrata (strain ATCC 2001 / BCRC 20586 / JCM 3761 / NBRC 0622 / NRRL Y-65 / CBS 138) (Yeast).